The primary structure comprises 495 residues: RNA-binding KH domain-containing protein PEPPER (495 aa).

KH domains follow at residues 73 to 140, 165 to 234, and 340 to 403; these read DCVF…MDAV, FSSV…LEAI, and QVSQ…EQLI. The segment at 474 to 495 is disordered; the sequence is GQTYGSEYRPASDVGGYSSYNL.

Interacts with HUA1 and HEN4. In terms of tissue distribution, detected in roots, shoots, leaves, flowers and fruits.

It localises to the nucleus. Functionally, regulates vegetative and gynoecium development. In concert with HUA2, antagonizes FLK by positively regulating FLC probably at transcriptional and post-transcriptional levels, and thus acts as a negative regulator of flowering. The sequence is that of RNA-binding KH domain-containing protein PEPPER from Arabidopsis thaliana (Mouse-ear cress).